We begin with the raw amino-acid sequence, 331 residues long: Ribosomal RNA small subunit methyltransferase H (331 aa).

Residues 38–40 (GGY), D56, F83, D100, and Q107 contribute to the S-adenosyl-L-methionine site. Residues 287–331 (DEAELAENPRARSARLRVGVRTDAPAGKVDPQALGTPLIPKKGRR) form a disordered region.

It belongs to the methyltransferase superfamily. RsmH family.

The protein resides in the cytoplasm. The enzyme catalyses cytidine(1402) in 16S rRNA + S-adenosyl-L-methionine = N(4)-methylcytidine(1402) in 16S rRNA + S-adenosyl-L-homocysteine + H(+). Its function is as follows. Specifically methylates the N4 position of cytidine in position 1402 (C1402) of 16S rRNA. The polypeptide is Ribosomal RNA small subunit methyltransferase H (Cereibacter sphaeroides (strain ATCC 17023 / DSM 158 / JCM 6121 / CCUG 31486 / LMG 2827 / NBRC 12203 / NCIMB 8253 / ATH 2.4.1.) (Rhodobacter sphaeroides)).